The chain runs to 490 residues: uncharacterized protein (490 aa).

Positions Phe370 to Ser385 are enriched in low complexity. The disordered stretch occupies residues Phe370–Leu406. Residues Glu391 to Leu406 show a composition bias toward polar residues.

The protein resides in the cytoplasm. It is found in the nucleus. This is an uncharacterized protein from Schizosaccharomyces pombe (strain 972 / ATCC 24843) (Fission yeast).